We begin with the raw amino-acid sequence, 228 residues long: DNA repair protein RecO (228 aa).

This sequence belongs to the RecO family.

Its function is as follows. Involved in DNA repair and RecF pathway recombination. In Mannheimia succiniciproducens (strain KCTC 0769BP / MBEL55E), this protein is DNA repair protein RecO.